Here is a 649-residue protein sequence, read N- to C-terminus: tRNA-guanine(15) transglycosylase (649 aa).

The active-site Nucleophile is Asp88. Positions 123 and 194 each coordinate substrate. Residues Cys280, Cys282, and Cys285 each coordinate Zn(2+). Residues 573-648 (KYRIVIDSSV…VAATLRGGLK (76 aa)) form the PUA domain.

Belongs to the archaeosine tRNA-ribosyltransferase family. Requires Zn(2+) as cofactor.

It catalyses the reaction guanosine(15) in tRNA + 7-cyano-7-deazaguanine = 7-cyano-7-carbaguanosine(15) in tRNA + guanine. It functions in the pathway tRNA modification; archaeosine-tRNA biosynthesis. In terms of biological role, exchanges the guanine residue with 7-cyano-7-deazaguanine (preQ0) at position 15 in the dihydrouridine loop (D-loop) of archaeal tRNAs. The sequence is that of tRNA-guanine(15) transglycosylase from Methanococcus maripaludis (strain C6 / ATCC BAA-1332).